Consider the following 346-residue polypeptide: Guanine nucleotide-binding protein subunit beta-2 (346 aa).

WD repeat units follow at residues 57–96 (GHIN…KVQI), 99–138 (LRSA…ASGV), 147–185 (GYEG…KTMD), 188–227 (GHAG…HKQM), 230–269 (GHDM…QIAQ), 274–313 (QKNT…HTGT), and 316–346 (GHEN…RLWL).

Belongs to the WD repeat G protein beta family. In terms of assembly, g proteins are composed of 3 units, alpha, beta and gamma. Interacts with Ggamma30A/Guanine nucleotide-binding protein subunit gamma-e. In terms of tissue distribution, expressed exclusively in photoreceptor cells in the compound eye (at protein level).

It is found in the cytoplasm. It localises to the cell projection. The protein localises to the axon. The protein resides in the rhabdomere. Functionally, guanine nucleotide-binding proteins (G proteins) are involved as a modulator or transducer in various transmembrane signaling systems. The beta and gamma chains are required for the GTPase activity, for replacement of GDP by GTP, and for G protein-effector interaction. The protein is Guanine nucleotide-binding protein subunit beta-2 (Gbeta76C) of Drosophila melanogaster (Fruit fly).